We begin with the raw amino-acid sequence, 397 residues long: ATP-dependent RNA helicase eIF4A (397 aa).

A Q motif motif is present at residues 23-51 (YTFDDLNLKPNIVRGIFGYGYESPSAIQQ). In terms of domain architecture, Helicase ATP-binding spans 54–224 (ILPITEGRDV…TKFMNNPVRI (171 aa)). 67–74 (AQSGTGKT) contacts ATP. The DEAD box motif lies at 172–175 (DEAD). The Helicase C-terminal domain maps to 235 to 396 (GIKQFYINVE…EMPADIGALF (162 aa)).

It belongs to the DEAD box helicase family. eIF4A subfamily. In terms of assembly, component of the eIF4F complex, which composition varies with external and internal environmental conditions. It is composed of at least eIF4A, eIF4E and eIF4G.

The protein resides in the cytoplasm. The enzyme catalyses ATP + H2O = ADP + phosphate + H(+). Functionally, ATP-dependent RNA helicase which is a subunit of the eIF4F complex involved in cap recognition and is required for mRNA binding to ribosome. In the current model of translation initiation, eIF4A unwinds RNA secondary structures in the 5'-UTR of mRNAs which is necessary to allow efficient binding of the small ribosomal subunit, and subsequent scanning for the initiator codon. The protein is ATP-dependent RNA helicase eIF4A (TIF1) of Debaryomyces hansenii (strain ATCC 36239 / CBS 767 / BCRC 21394 / JCM 1990 / NBRC 0083 / IGC 2968) (Yeast).